A 509-amino-acid chain; its full sequence is Phosphoglycerate kinase, glycosomal (509 aa).

(2R)-3-phosphoglycerate is bound by residues Val-32, Asp-33, Phe-34, Asn-35, Arg-48, Ser-70, His-71, Gly-73, Arg-74, Arg-224, His-260, and Arg-261. Residue Gly-306 participates in ADP binding. Gly-306 provides a ligand contact to CDP. Lys-308 lines the (2R)-3-phosphoglycerate pocket. Lys-308 provides a ligand contact to AMP. Asp-311 is a binding site for CDP. Asp-311 serves as a coordination point for Mg(2+). Lys-312 and Gly-330 together coordinate ADP. Lys-312 is an AMP binding site. Lys-312 contacts ATP. Position 330 (Gly-330) interacts with CDP. AMP-binding residues include Ala-331 and Ala-403. Residues Ala-331 and Ala-403 each coordinate ATP. ADP is bound by residues Ala-403 and Asn-427. CDP is bound by residues Gly-428 and Phe-433. Positions 433, 434, 466, and 467 each coordinate ADP. Residue Glu-434 coordinates AMP. Residues Glu-434, Asp-466, and Ser-467 each contribute to the ATP site. Asp-466 serves as a coordination point for Mg(2+).

Belongs to the phosphoglycerate kinase family. As to quaternary structure, monomer. Mg(2+) serves as cofactor.

The protein resides in the glycosome. The enzyme catalyses (2R)-3-phosphoglycerate + ATP = (2R)-3-phospho-glyceroyl phosphate + ADP. Its pathway is carbohydrate degradation; glycolysis; pyruvate from D-glyceraldehyde 3-phosphate: step 2/5. The chain is Phosphoglycerate kinase, glycosomal (56PGK) from Trypanosoma congolense.